The chain runs to 135 residues: NADH-quinone oxidoreductase subunit A (135 aa).

The next 3 membrane-spanning stretches (helical) occupy residues 9 to 29 (YFPILLQAVIAMGLAAGLLTV), 67 to 87 (VGMLFILFDIEAIFLYPWVVV), and 97 to 117 (LFGFYEMLTFVILILSGFFYI).

The protein belongs to the complex I subunit 3 family. NDH-1 is composed of 14 different subunits. Subunits NuoA, H, J, K, L, M, N constitute the membrane sector of the complex.

The protein localises to the cell inner membrane. It carries out the reaction a quinone + NADH + 5 H(+)(in) = a quinol + NAD(+) + 4 H(+)(out). Functionally, NDH-1 shuttles electrons from NADH, via FMN and iron-sulfur (Fe-S) centers, to quinones in the respiratory chain. The immediate electron acceptor for the enzyme in this species is believed to be ubiquinone. Couples the redox reaction to proton translocation (for every two electrons transferred, four hydrogen ions are translocated across the cytoplasmic membrane), and thus conserves the redox energy in a proton gradient. The sequence is that of NADH-quinone oxidoreductase subunit A from Solibacter usitatus (strain Ellin6076).